Consider the following 242-residue polypeptide: Agamous-like MADS-box protein AGL8 (242 aa).

In terms of domain architecture, MADS-box spans 3 to 57; sequence RGRVQLKRIENKINRQVTFSKRRSGLLKKAHEISVLCDAEVALIVFSSKGKLFEY. Residues 88 to 178 form the K-box domain; it reads SENWVLEHAK…LKKIKEREKK (91 aa). Residues 89-178 are a coiled coil; the sequence is ENWVLEHAKL…LKKIKEREKK (90 aa).

As to quaternary structure, homodimer capable of binding to CArG-box sequences. In terms of tissue distribution, vascular tissue of cauline leaves, floral shoot apex and valves of carpels and fruits.

It is found in the nucleus. In terms of biological role, probable transcription factor that promotes early floral meristem identity in synergy with APETALA1 and CAULIFLOWER. Is required subsequently for the transition of an inflorescence meristem into a floral meristem. Seems to be partially redundant to the function of APETALA1 and CAULIFLOWER in the up-regulation of LEAFY. Is also required for normal pattern of cell division, expansion and differentiation during morphogenesis of the silique. Probably not required for fruit elongation but instead is required to prevent ectopic activity of IND. Represses SAUR10 expression in stems and inflorescence branches. This Arabidopsis thaliana (Mouse-ear cress) protein is Agamous-like MADS-box protein AGL8 (AGL8).